A 569-amino-acid polypeptide reads, in one-letter code: Arginine--tRNA ligase (569 aa).

The 'HIGH' region signature appears at 128–138 (ANPTGPLHVGH).

Belongs to the class-I aminoacyl-tRNA synthetase family. In terms of assembly, monomer.

Its subcellular location is the cytoplasm. The catalysed reaction is tRNA(Arg) + L-arginine + ATP = L-arginyl-tRNA(Arg) + AMP + diphosphate. The polypeptide is Arginine--tRNA ligase (Paracidovorax citrulli (strain AAC00-1) (Acidovorax citrulli)).